Here is a 157-residue protein sequence, read N- to C-terminus: Transcriptional repressor NrdR (157 aa).

The segment at 3 to 34 is a zinc-finger region; that stretch reads CPFCSATDTKVIDSRLVADGHQVRRRRECLLC. In terms of domain architecture, ATP-cone spans 49 to 139; the sequence is PRVVKQDGSR…VYRAFEDVSE (91 aa).

It belongs to the NrdR family. Zn(2+) serves as cofactor.

Its function is as follows. Negatively regulates transcription of bacterial ribonucleotide reductase nrd genes and operons by binding to NrdR-boxes. This is Transcriptional repressor NrdR from Shewanella loihica (strain ATCC BAA-1088 / PV-4).